Consider the following 102-residue polypeptide: Small ribosomal subunit protein uS10 (102 aa).

This sequence belongs to the universal ribosomal protein uS10 family. In terms of assembly, part of the 30S ribosomal subunit.

Functionally, involved in the binding of tRNA to the ribosomes. The polypeptide is Small ribosomal subunit protein uS10 (Clostridium kluyveri (strain NBRC 12016)).